A 253-amino-acid polypeptide reads, in one-letter code: Phosphate import ATP-binding protein PstB (253 aa).

The region spanning 5–248 is the ABC transporter domain; sequence IETVNLNVYY…PEHELTEKYV (244 aa). 37–44 lines the ATP pocket; the sequence is GPSGCGKS.

It belongs to the ABC transporter superfamily. Phosphate importer (TC 3.A.1.7) family. As to quaternary structure, the complex is composed of two ATP-binding proteins (PstB), two transmembrane proteins (PstC and PstA) and a solute-binding protein (PstS).

The protein localises to the cell membrane. The enzyme catalyses phosphate(out) + ATP + H2O = ADP + 2 phosphate(in) + H(+). Functionally, part of the ABC transporter complex PstSACB involved in phosphate import. Responsible for energy coupling to the transport system. In Thermococcus kodakarensis (strain ATCC BAA-918 / JCM 12380 / KOD1) (Pyrococcus kodakaraensis (strain KOD1)), this protein is Phosphate import ATP-binding protein PstB.